A 316-amino-acid chain; its full sequence is HPr kinase/phosphorylase (316 aa).

Residues H143 and K164 contribute to the active site. ATP is bound at residue 158-165 (GEAGSGKS). A Mg(2+)-binding site is contributed by S165. The Proton acceptor; for phosphorylation activity. Proton donor; for dephosphorylation activity role is filled by D182. The important for the catalytic mechanism of both phosphorylation and dephosphorylation stretch occupies residues 206-215 (LEVRGLGVLN). E207 is a Mg(2+) binding site. R251 is an active-site residue. The important for the catalytic mechanism of dephosphorylation stretch occupies residues 272–277 (PVMPGR).

Belongs to the HPrK/P family. Homohexamer. Requires Mg(2+) as cofactor.

It catalyses the reaction [HPr protein]-L-serine + ATP = [HPr protein]-O-phospho-L-serine + ADP + H(+). The catalysed reaction is [HPr protein]-O-phospho-L-serine + phosphate + H(+) = [HPr protein]-L-serine + diphosphate. Its function is as follows. Catalyzes the ATP- as well as the pyrophosphate-dependent phosphorylation of a specific serine residue in HPr, a phosphocarrier protein of the phosphoenolpyruvate-dependent sugar phosphotransferase system (PTS). HprK/P also catalyzes the pyrophosphate-producing, inorganic phosphate-dependent dephosphorylation (phosphorolysis) of seryl-phosphorylated HPr (P-Ser-HPr). The chain is HPr kinase/phosphorylase from Xanthomonas campestris pv. campestris (strain 8004).